A 97-amino-acid chain; its full sequence is uncharacterized protein (97 aa).

2 disordered regions span residues 1–20 (MTEGADMARTSRPPVTIASD) and 52–97 (VPAA…GRRA).

This is an uncharacterized protein from Paracoccus pantotrophus (Thiosphaera pantotropha).